Here is a 214-residue protein sequence, read N- to C-terminus: Leucyl/phenylalanyl-tRNA--protein transferase (214 aa).

Belongs to the L/F-transferase family.

It localises to the cytoplasm. The enzyme catalyses N-terminal L-lysyl-[protein] + L-leucyl-tRNA(Leu) = N-terminal L-leucyl-L-lysyl-[protein] + tRNA(Leu) + H(+). The catalysed reaction is N-terminal L-arginyl-[protein] + L-leucyl-tRNA(Leu) = N-terminal L-leucyl-L-arginyl-[protein] + tRNA(Leu) + H(+). It catalyses the reaction L-phenylalanyl-tRNA(Phe) + an N-terminal L-alpha-aminoacyl-[protein] = an N-terminal L-phenylalanyl-L-alpha-aminoacyl-[protein] + tRNA(Phe). In terms of biological role, functions in the N-end rule pathway of protein degradation where it conjugates Leu, Phe and, less efficiently, Met from aminoacyl-tRNAs to the N-termini of proteins containing an N-terminal arginine or lysine. This chain is Leucyl/phenylalanyl-tRNA--protein transferase, found in Cereibacter sphaeroides (strain ATCC 17029 / ATH 2.4.9) (Rhodobacter sphaeroides).